Here is a 57-residue protein sequence, read N- to C-terminus: Large ribosomal subunit protein bL32 (57 aa).

It belongs to the bacterial ribosomal protein bL32 family.

In Bacillus pumilus (strain SAFR-032), this protein is Large ribosomal subunit protein bL32.